Reading from the N-terminus, the 112-residue chain is Divalent-cation tolerance protein CutA (112 aa).

Positions 16, 83, and 84 each coordinate Cu cation.

This sequence belongs to the CutA family. As to quaternary structure, homotrimer. Requires Cu cation as cofactor.

Its subcellular location is the cytoplasm. Functionally, involved in resistance toward heavy metals. The chain is Divalent-cation tolerance protein CutA from Escherichia coli O81 (strain ED1a).